A 169-amino-acid chain; its full sequence is X polypeptide (169 aa).

This sequence belongs to the IagB/IpgF/P19 family.

This chain is X polypeptide (X), found in Escherichia coli.